The primary structure comprises 249 residues: 4-hydroxy-tetrahydrodipicolinate reductase (249 aa).

Residues 77–79 (ATT) and 101–104 (SYNT) contribute to the NAD(+) site. Histidine 133 acts as the Proton donor/acceptor in catalysis. Histidine 134 contributes to the (S)-2,3,4,5-tetrahydrodipicolinate binding site. The Proton donor role is filled by lysine 137. 143-144 (GT) contacts (S)-2,3,4,5-tetrahydrodipicolinate.

Belongs to the DapB family.

The protein localises to the cytoplasm. It carries out the reaction (S)-2,3,4,5-tetrahydrodipicolinate + NAD(+) + H2O = (2S,4S)-4-hydroxy-2,3,4,5-tetrahydrodipicolinate + NADH + H(+). The catalysed reaction is (S)-2,3,4,5-tetrahydrodipicolinate + NADP(+) + H2O = (2S,4S)-4-hydroxy-2,3,4,5-tetrahydrodipicolinate + NADPH + H(+). It functions in the pathway amino-acid biosynthesis; L-lysine biosynthesis via DAP pathway; (S)-tetrahydrodipicolinate from L-aspartate: step 4/4. Its function is as follows. Catalyzes the conversion of 4-hydroxy-tetrahydrodipicolinate (HTPA) to tetrahydrodipicolinate. The protein is 4-hydroxy-tetrahydrodipicolinate reductase of Exiguobacterium sp. (strain ATCC BAA-1283 / AT1b).